The chain runs to 65 residues: Small ribosomal subunit protein eS27 (65 aa).

Positions 20, 23, 39, and 42 each coordinate Zn(2+). Residues 20–42 (CIDCGNEQIVFSHPATKVRCLVC) form a C4-type zinc finger.

It belongs to the eukaryotic ribosomal protein eS27 family. In terms of assembly, part of the 30S ribosomal subunit. Zn(2+) serves as cofactor.

This chain is Small ribosomal subunit protein eS27, found in Thermococcus gammatolerans (strain DSM 15229 / JCM 11827 / EJ3).